The following is a 729-amino-acid chain: Polyribonucleotide nucleotidyltransferase (729 aa).

2 residues coordinate Mg(2+): Asp510 and Asp516. Residues 576–635 (PRVISVKIPVDKIGEVIGPKGKMINQIQADSGAEITVEDDGTIYIGAADGTSAETARSAI) enclose the KH domain. The region spanning 647 to 719 (GERYLGTIVK…ARGKISLSPS (73 aa)) is the S1 motif domain.

The protein belongs to the polyribonucleotide nucleotidyltransferase family. Mg(2+) serves as cofactor.

Its subcellular location is the cytoplasm. The enzyme catalyses RNA(n+1) + phosphate = RNA(n) + a ribonucleoside 5'-diphosphate. Functionally, involved in mRNA degradation. Catalyzes the phosphorolysis of single-stranded polyribonucleotides processively in the 3'- to 5'-direction. The protein is Polyribonucleotide nucleotidyltransferase of Frankia alni (strain DSM 45986 / CECT 9034 / ACN14a).